Consider the following 1184-residue polypeptide: Cartilage intermediate layer protein 1 (1184 aa).

An N-terminal signal peptide occupies residues 1–21 (MVGTKAWVFSFLVLEVTSVLG). 2 N-linked (GlcNAc...) asparagine glycosylation sites follow: N129 and N132. Residues 149-201 (ERIWSPWSPWSKCSAACGQTGVQTRTRICLAEMVSLCSEASEEGQHCMGQDCT) enclose the TSP type-1 domain. Disulfide bonds link C161-C195, C165-C200, C177-C185, and C330-C376. The Ig-like C2-type domain maps to 309-395 (PYMVMNPETK…KSKVAQLIVI (87 aa)). N346, N420, N550, N631, N1000, and N1056 each carry an N-linked (GlcNAc...) asparagine glycan. The disordered stretch occupies residues 1136–1170 (TPAQSPAAGTVQGRVPSRRQQRASRGGQRQGGVVA). Low complexity predominate over residues 1158-1170 (ASRGGQRQGGVVA).

In terms of assembly, monomer. Interacts with TGFB1. Post-translationally, cleaved into 2 chains possibly by a furin-like protease upon or preceding secretion. In terms of tissue distribution, specifically expressed in cartilage. Localizes in the intermediates layer of articular cartilage but neither in the superficial nor in the deepest regions. Specifically and highly expressed in intervertebral disk tissue. Expression increases with aging in hip articular cartilage. Overexpressed in articular hyaline cartilage from patients with calcium pyrophosphate dihydrate crystal deposition disease (CPPD). Expression in intervertebral disk tissue from individuals with lumbar disk disease increases as disk degeneration progresses.

It is found in the secreted. It localises to the extracellular space. Its subcellular location is the extracellular matrix. Functionally, probably plays a role in cartilage scaffolding. May act by antagonizing TGF-beta1 (TGFB1) and IGF1 functions. Has the ability to suppress IGF1-induced proliferation and sulfated proteoglycan synthesis, and inhibits ligand-induced IGF1R autophosphorylation. May inhibit TGFB1-mediated induction of cartilage matrix genes via its interaction with TGFB1. Overexpression may lead to impair chondrocyte growth and matrix repair and indirectly promote inorganic pyrophosphate (PPi) supersaturation in aging and osteoarthritis cartilage. This Homo sapiens (Human) protein is Cartilage intermediate layer protein 1 (CILP).